The sequence spans 215 residues: Intraflagellar transport protein 43 homolog B (215 aa).

The disordered stretch occupies residues 1 to 107 (MDDHLKLGDS…SDGEGDIPVI (107 aa)).

This sequence belongs to the IFT43 family. In terms of assembly, component of IFT complex A.

Its function is as follows. Component of IFT complex A (IFT-A) involved in retrograde ciliary transport along microtubules from the ciliary tip to the base. The polypeptide is Intraflagellar transport protein 43 homolog B (ift43b) (Salmo salar (Atlantic salmon)).